The sequence spans 185 residues: Elongation factor P (185 aa).

Belongs to the elongation factor P family.

It is found in the cytoplasm. Its pathway is protein biosynthesis; polypeptide chain elongation. Functionally, involved in peptide bond synthesis. Stimulates efficient translation and peptide-bond synthesis on native or reconstituted 70S ribosomes in vitro. Probably functions indirectly by altering the affinity of the ribosome for aminoacyl-tRNA, thus increasing their reactivity as acceptors for peptidyl transferase. The sequence is that of Elongation factor P from Brevibacillus brevis (strain 47 / JCM 6285 / NBRC 100599).